Here is a 526-residue protein sequence, read N- to C-terminus: Calcium-dependent protein kinase 28 (526 aa).

A disordered region spans residues Met-1–Val-37. Residues Tyr-49–Ile-307 enclose the Protein kinase domain. ATP contacts are provided by residues Leu-55–Thr-63 and Lys-78. The active-site Proton acceptor is Asp-173. The tract at residues Ala-313–Ile-343 is autoinhibitory domain. EF-hand domains follow at residues Glu-350–Asp-385, Leu-386–Leu-421, Glu-422–Ser-457, and His-460–Gly-491. Ca(2+) is bound by residues Asp-363, Asp-365, Ser-367, Thr-369, Glu-374, Asp-399, Asp-401, Ser-403, Thr-405, Glu-410, Asp-435, Asp-437, Ser-439, Glu-446, Asp-469, Asn-471, Asp-473, Gln-475, and Glu-480.

Belongs to the protein kinase superfamily. Ser/Thr protein kinase family. CDPK subfamily.

It catalyses the reaction L-seryl-[protein] + ATP = O-phospho-L-seryl-[protein] + ADP + H(+). The enzyme catalyses L-threonyl-[protein] + ATP = O-phospho-L-threonyl-[protein] + ADP + H(+). Its activity is regulated as follows. Activated by calcium. Autophosphorylation may play an important role in the regulation of the kinase activity. Its function is as follows. May play a role in signal transduction pathways that involve calcium as a second messenger. In Oryza sativa subsp. japonica (Rice), this protein is Calcium-dependent protein kinase 28.